The primary structure comprises 131 residues: Large ribosomal subunit protein bL19 (131 aa).

The tract at residues Lys-112–Ala-131 is disordered.

Belongs to the bacterial ribosomal protein bL19 family.

Functionally, this protein is located at the 30S-50S ribosomal subunit interface and may play a role in the structure and function of the aminoacyl-tRNA binding site. The sequence is that of Large ribosomal subunit protein bL19 from Caulobacter vibrioides (strain ATCC 19089 / CIP 103742 / CB 15) (Caulobacter crescentus).